The chain runs to 331 residues: Ribose operon repressor (331 aa).

The HTH lacI-type domain occupies 1 to 56; sequence MTTIRDVAKHAKVSVATVSRVLNKKGYVSKEAEEAVLQAIKELNYQPSSVARSLYH. The H-T-H motif DNA-binding region spans 4–23; it reads IRDVAKHAKVSVATVSRVLN.

Its function is as follows. Transcriptional repressor for the ribose rbsDACBK operon. The polypeptide is Ribose operon repressor (rbsR) (Halalkalibacterium halodurans (strain ATCC BAA-125 / DSM 18197 / FERM 7344 / JCM 9153 / C-125) (Bacillus halodurans)).